We begin with the raw amino-acid sequence, 481 residues long: Palmitoyltransferase PFA4 (481 aa).

The segment at 1 to 22 (MTNQDPDDGAYPSSQSDDDGIE) is disordered. The Cytoplasmic portion of the chain corresponds to 1 to 66 (MTNQDPDDGA…APLTGRRRTP (66 aa)). The chain crosses the membrane as a helical span at residues 67–87 (LSWTEVIWVSLTLLLIAVLGY). The Lumenal portion of the chain corresponds to 88–108 (SSQLYVMLPYYEKTPSFSPQA). The chain crosses the membrane as a helical span at residues 109 to 129 (LAAVLVPFNLGLLAIYYNYWL). The Cytoplasmic segment spans residues 130 to 223 (CVTTDAGSVP…LANCVGHFNH (94 aa)). A DHHC domain is found at 181–231 (RYCKTCSAFKPPRSHHCKTCQRCVLRMDHHCPWLANCVGHFNHAHFIRFLF). C211 serves as the catalytic S-palmitoyl cysteine intermediate. The helical transmembrane segment at 224-244 (AHFIRFLFYVDVTCLYHLIMI) threads the bilayer. Topologically, residues 245 to 265 (SCRVLDSFNSYTYWREPCARE) are lumenal. The helical transmembrane segment at 266–286 (LVWLVVNYALCIPVILLVGIF) threads the bilayer. Topologically, residues 287–481 (SLYHFYCLAV…EVRPHTPWSV (195 aa)) are cytoplasmic. The disordered stretch occupies residues 370–481 (SQYRWPPKDP…EVRPHTPWSV (112 aa)). Positions 418-431 (SSPSSSDSHSSLHL) are enriched in low complexity. 2 stretches are compositionally biased toward basic and acidic residues: residues 441-452 (LPHHFDPPHDPD) and 466-475 (RGSEGYEVRP).

It belongs to the DHHC palmitoyltransferase family. PFA4 subfamily.

The protein localises to the endoplasmic reticulum membrane. It catalyses the reaction L-cysteinyl-[protein] + hexadecanoyl-CoA = S-hexadecanoyl-L-cysteinyl-[protein] + CoA. Mediates the reversible addition of palmitate to target proteins, thereby regulating their membrane association and biological function. The chain is Palmitoyltransferase PFA4 from Mycosarcoma maydis (Corn smut fungus).